A 405-amino-acid polypeptide reads, in one-letter code: Phosphoglycerate kinase (405 aa).

Residues 23–25 (DFN), R39, 62–65 (HLGR), R121, and R154 contribute to the substrate site. ATP is bound by residues K207, G298, E329, and 355–358 (GGDT).

This sequence belongs to the phosphoglycerate kinase family. Monomer.

Its subcellular location is the cytoplasm. It carries out the reaction (2R)-3-phosphoglycerate + ATP = (2R)-3-phospho-glyceroyl phosphate + ADP. It participates in carbohydrate degradation; glycolysis; pyruvate from D-glyceraldehyde 3-phosphate: step 2/5. In Campylobacter hominis (strain ATCC BAA-381 / DSM 21671 / CCUG 45161 / LMG 19568 / NCTC 13146 / CH001A), this protein is Phosphoglycerate kinase.